A 61-amino-acid polypeptide reads, in one-letter code: MRCLPVFVILLLLIASAPGVDVQPKTKYYVPRASRRDFAKKTPKRLSKLRGCCPRSFLCCR.

The signal sequence occupies residues 1–19; that stretch reads MRCLPVFVILLLLIASAPG. Positions 20-50 are excised as a propeptide; that stretch reads VDVQPKTKYYVPRASRRDFAKKTPKRLSKLR.

The protein belongs to the conotoxin T superfamily. Post-translationally, contains 2 disulfide bonds that can be either 'C1-C3, C2-C4' or 'C1-C4, C2-C3', since these disulfide connectivities have been observed for conotoxins with cysteine framework V (for examples, see AC P0DQQ7 and AC P81755). Expressed by the venom duct.

The protein localises to the secreted. The chain is Conotoxin Vn5.3 from Conus ventricosus (Mediterranean cone).